The primary structure comprises 200 residues: Small ribosomal subunit protein mS26 (200 aa).

The N-terminal 27 residues, 1–27, are a transit peptide targeting the mitochondrion; it reads MLRALNRLAARPETRPPTPLLLPVRGR. Residues 1-44 form a disordered region; sequence MLRALNRLAARPETRPPTPLLLPVRGRKTRHDPPAKSKVGRVQT. Position 159 is an N6-acetyllysine (K159).

Belongs to the mitochondrion-specific ribosomal protein mS26 family. Component of the mitochondrial ribosome small subunit (28S) which comprises a 12S rRNA and about 30 distinct proteins.

It is found in the mitochondrion. The sequence is that of Small ribosomal subunit protein mS26 (Mrps26) from Mus musculus (Mouse).